The chain runs to 287 residues: 4-diphosphocytidyl-2-C-methyl-D-erythritol kinase (287 aa).

Lys11 is an active-site residue. Position 93–103 (93–103) interacts with ATP; it reads PFGAGLGGGSS. Asp135 is a catalytic residue.

The protein belongs to the GHMP kinase family. IspE subfamily.

The catalysed reaction is 4-CDP-2-C-methyl-D-erythritol + ATP = 4-CDP-2-C-methyl-D-erythritol 2-phosphate + ADP + H(+). It functions in the pathway isoprenoid biosynthesis; isopentenyl diphosphate biosynthesis via DXP pathway; isopentenyl diphosphate from 1-deoxy-D-xylulose 5-phosphate: step 3/6. Functionally, catalyzes the phosphorylation of the position 2 hydroxy group of 4-diphosphocytidyl-2C-methyl-D-erythritol. This Chlorobium luteolum (strain DSM 273 / BCRC 81028 / 2530) (Pelodictyon luteolum) protein is 4-diphosphocytidyl-2-C-methyl-D-erythritol kinase.